The sequence spans 213 residues: MTTIQPAPMAFFTNRPTTEIARDLLGTHLLYTSHQGTLGGLIVETEAYMGAQDTAAHAYNGRRTPFSEPLYHEPGTIYIYQLRSFFLFDIVTQAVDQPQGVLIRAIEPTHGLAQMQRNRPNKPSVNLTNGPGKLMGALGIHDKQLTFKNVATAPLTIDLANRRQPRHITTAPRIGVNAKAASGQLPYRYFITGNPYVSGTLKKDWDREQHGWL.

This sequence belongs to the DNA glycosylase MPG family.

This chain is Putative 3-methyladenine DNA glycosylase, found in Latilactobacillus sakei subsp. sakei (strain 23K) (Lactobacillus sakei subsp. sakei).